The following is a 199-amino-acid chain: Imidazoleglycerol-phosphate dehydratase (199 aa).

It belongs to the imidazoleglycerol-phosphate dehydratase family.

It localises to the cytoplasm. The catalysed reaction is D-erythro-1-(imidazol-4-yl)glycerol 3-phosphate = 3-(imidazol-4-yl)-2-oxopropyl phosphate + H2O. Its pathway is amino-acid biosynthesis; L-histidine biosynthesis; L-histidine from 5-phospho-alpha-D-ribose 1-diphosphate: step 6/9. This is Imidazoleglycerol-phosphate dehydratase from Desulfotalea psychrophila (strain LSv54 / DSM 12343).